A 477-amino-acid polypeptide reads, in one-letter code: C4-dicarboxylate transport protein 1 (477 aa).

8 consecutive transmembrane segments (helical) span residues 21–39 (PYVQVLVAILLGVAVGHFY), 59–76 (MIIAPVIFLTVSTGIAGM), 89–111 (AMVYFVTFSTLALIVGLIVGNVI), 162–179 (ILQVLFFSVLFGIALAMV), 200–221 (LVGILMKAAPIGAFGAMAFTIG), 231–253 (LAMLVGTFYLTAFLFVFGVLGAV), 342–364 (VLLLLVAMLSSKGAAGVTGAGFV), and 368–387 (ATLSVVPAVPVAGMALILGV). A disordered region spans residues 435-477 (SAGQPLITPAPSNSAASLPVESPGWSQTPDDRAAGSKQTLAGR).

It belongs to the dicarboxylate/amino acid:cation symporter (DAACS) (TC 2.A.23) family.

It localises to the cell inner membrane. Functionally, responsible for the transport of dicarboxylates such as succinate, fumarate, and malate from the periplasm across the membrane. This transport system plays an important role in the energy supply of rhizobium-legume symbionts. This is C4-dicarboxylate transport protein 1 (dctA1) from Mesorhizobium japonicum (strain LMG 29417 / CECT 9101 / MAFF 303099) (Mesorhizobium loti (strain MAFF 303099)).